A 98-amino-acid polypeptide reads, in one-letter code: Co-chaperonin GroES (98 aa).

Belongs to the GroES chaperonin family. Heptamer of 7 subunits arranged in a ring. Interacts with the chaperonin GroEL.

The protein localises to the cytoplasm. Together with the chaperonin GroEL, plays an essential role in assisting protein folding. The GroEL-GroES system forms a nano-cage that allows encapsulation of the non-native substrate proteins and provides a physical environment optimized to promote and accelerate protein folding. GroES binds to the apical surface of the GroEL ring, thereby capping the opening of the GroEL channel. The protein is Co-chaperonin GroES of Micrococcus luteus (strain ATCC 4698 / DSM 20030 / JCM 1464 / CCM 169 / CCUG 5858 / IAM 1056 / NBRC 3333 / NCIMB 9278 / NCTC 2665 / VKM Ac-2230) (Micrococcus lysodeikticus).